The primary structure comprises 62 residues: Alkaline proteinase (62 aa).

The Peptidase S8 domain occupies 1–62 (GSTSYIYDTS…FAPGTSVLSS (62 aa)). Asp-21 (charge relay system) is an active-site residue.

The protein localises to the secreted. With respect to regulation, inhibited by phenylmethanesulfonyl fluoride (PMSF) and chymostatin (CST), but not by Bowman-Birk type trypsin-chymotrypsin inhibitor (BBI). Functionally, serine protease. May be involved in the invasion of grains and hydrolysis of grain proteins. In Fusarium culmorum, this protein is Alkaline proteinase.